A 408-amino-acid polypeptide reads, in one-letter code: MNNMLDIWQSRLQEHIKETRTYMKYMLNDHLVIVLIFFLAGAASWYSKWIRDIPAHFPSFWVMAVLFSLVLTSSYVRTLLKEADLVFLLPLEAKMEPYLKQAFVYSYVSQLFPLIALSIVAMPLYFAVTPGASLVSYAAVFVQLLLLKAWNQVMEWRTTFQNDRSMKRMDVIIRFAANTLVLYFVFQSVYMYALLVYVIMAVLYLYMSSAAKRKTFKWESHIESELRRKQRFYRIANLFTDVPHLRKQAKRRAYLDFLLRLVPFEQRKTFAYMFTRAFLRSSDYLGILVRLTIVFALIIMYVSASPLIAAVLTVFAIFITGIQLLPLFGHFDHLALQELYPVQKETKLKSYFSLLKTALSIQALLMSVASAYAAGLTGFLYALIGSAVLIFVVLPAYMTTRLKKHGKL.

9 consecutive transmembrane segments (helical) span residues 30–50 (HLVI…SKWI), 53–73 (IPAH…VLTS), 111–131 (LFPL…VTPG), 134–154 (LVSY…NQVM), 180–200 (LVLY…YVIM), 284–304 (YLGI…YVSA), 308–328 (IAAV…LPLF), 351–371 (YFSL…VASA), and 374–394 (AGLT…FVVL).

The protein resides in the cell membrane. In terms of biological role, presumed to form part of an ABC-transporter, it may form a transport channel. The chain is Protein EcsB (ecsB) from Bacillus subtilis (strain 168).